Consider the following 1026-residue polypeptide: Multidrug resistance protein MdtC (1026 aa).

A run of 11 helical transmembrane segments spans residues 15 to 35 (ILIA…LPVA), 333 to 353 (EVEE…FLFL), 360 to 380 (LIPA…MYLC), 387 to 407 (LSLM…IVVL), 431 to 451 (VGFT…PLLL), 463 to 483 (FAVT…TLTP), 528 to 548 (LVGV…IAIP), 853 to 873 (LILI…LYES), 897 to 917 (LFNA…IGIV), 953 to 973 (PIMM…LSGG), and 984 to 1004 (ITIV…TPVV).

This sequence belongs to the resistance-nodulation-cell division (RND) (TC 2.A.6) family. MdtC subfamily. Part of a tripartite efflux system composed of MdtA, MdtB and MdtC. MdtC forms a heteromultimer with MdtB.

The protein resides in the cell inner membrane. This is Multidrug resistance protein MdtC from Salmonella choleraesuis (strain SC-B67).